Consider the following 523-residue polypeptide: Cytochrome b5 reductase 4 (523 aa).

Positions 54 to 130 (LIDVTEEELA…LKECLIGRMA (77 aa)) constitute a Cytochrome b5 heme-binding domain. 2 residues coordinate heme: histidine 89 and histidine 112. The 92-residue stretch at 167-258 (ESHPWYDWFQ…KEPVSWKSLG (92 aa)) folds into the CS domain. Residues 275–387 (LYYRKCRLAS…SNPQGTFSSF (113 aa)) enclose the FAD-binding FR-type domain. FAD-binding positions include 367–382 (ENLT…NPQG) and 394–426 (DVFL…KAKL).

The protein belongs to the flavoprotein pyridine nucleotide cytochrome reductase family. Requires FAD as cofactor.

It localises to the endoplasmic reticulum. The catalysed reaction is 2 Fe(III)-[cytochrome b5] + NADH = 2 Fe(II)-[cytochrome b5] + NAD(+) + H(+). Its function is as follows. NADH-cytochrome b5 reductase involved in endoplasmic reticulum stress response pathway. This is Cytochrome b5 reductase 4 (cyb5r4) from Xenopus tropicalis (Western clawed frog).